Reading from the N-terminus, the 84-residue chain is MATNKSCTAFDFNKMLDGVCTYVKGVQQYLTELETSTQGTVDLGTMFNLQFRMQILSQYMESVSNILTAVNTEMITMARAVKGS.

It belongs to the chlamydial CPn_0710/CT_666/TC_0037 family.

This is an uncharacterized protein from Chlamydia pneumoniae (Chlamydophila pneumoniae).